The sequence spans 317 residues: Acetyl-coenzyme A carboxylase carboxyl transferase subunit alpha (317 aa).

The CoA carboxyltransferase C-terminal domain occupies 37–292; it reads EINKKLEQTK…ADYITKGYNE (256 aa).

This sequence belongs to the AccA family. Acetyl-CoA carboxylase is a heterohexamer composed of biotin carboxyl carrier protein (AccB), biotin carboxylase (AccC) and two subunits each of ACCase subunit alpha (AccA) and ACCase subunit beta (AccD).

Its subcellular location is the cytoplasm. It carries out the reaction N(6)-carboxybiotinyl-L-lysyl-[protein] + acetyl-CoA = N(6)-biotinyl-L-lysyl-[protein] + malonyl-CoA. It participates in lipid metabolism; malonyl-CoA biosynthesis; malonyl-CoA from acetyl-CoA: step 1/1. Its function is as follows. Component of the acetyl coenzyme A carboxylase (ACC) complex. First, biotin carboxylase catalyzes the carboxylation of biotin on its carrier protein (BCCP) and then the CO(2) group is transferred by the carboxyltransferase to acetyl-CoA to form malonyl-CoA. This chain is Acetyl-coenzyme A carboxylase carboxyl transferase subunit alpha, found in Flavobacterium johnsoniae (strain ATCC 17061 / DSM 2064 / JCM 8514 / BCRC 14874 / CCUG 350202 / NBRC 14942 / NCIMB 11054 / UW101) (Cytophaga johnsonae).